We begin with the raw amino-acid sequence, 84 residues long: Large ribosomal subunit protein bL27 (84 aa).

The tract at residues 1–22 (MAHKKAGGSTRNGRDSESKRLG) is disordered.

It belongs to the bacterial ribosomal protein bL27 family.

This Shewanella denitrificans (strain OS217 / ATCC BAA-1090 / DSM 15013) protein is Large ribosomal subunit protein bL27.